A 151-amino-acid polypeptide reads, in one-letter code: MITDTCILHIEEVLELLPHRFPFLLVDRVLNFEKGKFLRAVKNVSFNEPFFQGHFPGKPIFPGVLILEAMAQATGILAFKSMGKLAPGEFYYFAAIDEARFKRPVQPGDQMILNVEFIKERCGVARFKGIATVNEEMACEASMMCARRKEI.

H54 is an active-site residue.

The protein belongs to the thioester dehydratase family. FabZ subfamily.

Its subcellular location is the cytoplasm. It carries out the reaction a (3R)-hydroxyacyl-[ACP] = a (2E)-enoyl-[ACP] + H2O. Functionally, involved in unsaturated fatty acids biosynthesis. Catalyzes the dehydration of short chain beta-hydroxyacyl-ACPs and long chain saturated and unsaturated beta-hydroxyacyl-ACPs. This chain is 3-hydroxyacyl-[acyl-carrier-protein] dehydratase FabZ, found in Blochmanniella floridana.